A 396-amino-acid chain; its full sequence is Elongation factor Tu (396 aa).

The tr-type G domain maps to 10–206; it reads KPHVNIGTIG…AVDSYIPDPE (197 aa). Positions 19-26 are G1; that stretch reads GHVDHGKT. 19-26 lines the GTP pocket; it reads GHVDHGKT. Thr-26 contributes to the Mg(2+) binding site. The tract at residues 60 to 64 is G2; it reads GITIA. Positions 81–84 are G3; the sequence is DCPG. GTP is bound by residues 81–85 and 136–139; these read DCPGH and NKAD. The segment at 136–139 is G4; that stretch reads NKAD. A G5 region spans residues 174-176; sequence SAL.

This sequence belongs to the TRAFAC class translation factor GTPase superfamily. Classic translation factor GTPase family. EF-Tu/EF-1A subfamily. As to quaternary structure, monomer.

It localises to the cytoplasm. It carries out the reaction GTP + H2O = GDP + phosphate + H(+). In terms of biological role, GTP hydrolase that promotes the GTP-dependent binding of aminoacyl-tRNA to the A-site of ribosomes during protein biosynthesis. This chain is Elongation factor Tu, found in Pelobacter propionicus (strain DSM 2379 / NBRC 103807 / OttBd1).